A 305-amino-acid chain; its full sequence is Tyrosine recombinase XerD (305 aa).

One can recognise a Core-binding (CB) domain in the interval 2 to 87 (SQGEAWADAF…AVRQFYRFVL (86 aa)). The 188-residue stretch at 108 to 295 (PLPKVLERDE…AGEHLAHIVQ (188 aa)) folds into the Tyr recombinase domain. Active-site residues include Arg149, Lys173, His247, Arg250, and His273. Residue Tyr282 is the O-(3'-phospho-DNA)-tyrosine intermediate of the active site.

Belongs to the 'phage' integrase family. XerD subfamily. Forms a cyclic heterotetrameric complex composed of two molecules of XerC and two molecules of XerD.

Its subcellular location is the cytoplasm. Site-specific tyrosine recombinase, which acts by catalyzing the cutting and rejoining of the recombining DNA molecules. The XerC-XerD complex is essential to convert dimers of the bacterial chromosome into monomers to permit their segregation at cell division. It also contributes to the segregational stability of plasmids. The sequence is that of Tyrosine recombinase XerD from Caulobacter vibrioides (strain ATCC 19089 / CIP 103742 / CB 15) (Caulobacter crescentus).